A 299-amino-acid polypeptide reads, in one-letter code: Tetrahydromethanopterin S-methyltransferase subunit E (299 aa).

6 helical membrane-spanning segments follow: residues 57–77 (AISGEPVSYGLYVAVAGSVAW), 80–100 (INAGLNAVLALIIGSGVAAIV), 133–153 (IGPIVGHGFIAVFTMVLAAYL), 158–178 (LGNPFPLPLVALIFGITVGAI), 237–257 (GLCFGLIIFLDGWRSIVGNII), and 261–281 (LVTKTSIALVVGLLVVVAAMI).

The protein belongs to the MtrE family. In terms of assembly, the complex is composed of 8 subunits; MtrA, MtrB, MtrC, MtrD, MtrE, MtrF, MtrG and MtrH.

The protein localises to the cell membrane. It carries out the reaction 5-methyl-5,6,7,8-tetrahydromethanopterin + coenzyme M + 2 Na(+)(in) = 5,6,7,8-tetrahydromethanopterin + methyl-coenzyme M + 2 Na(+)(out). The protein operates within one-carbon metabolism; methanogenesis from CO(2); methyl-coenzyme M from 5,10-methylene-5,6,7,8-tetrahydromethanopterin: step 2/2. Its function is as follows. Part of a complex that catalyzes the formation of methyl-coenzyme M and tetrahydromethanopterin from coenzyme M and methyl-tetrahydromethanopterin. This is an energy-conserving, sodium-ion translocating step. The protein is Tetrahydromethanopterin S-methyltransferase subunit E of Methanococcus vannielii (strain ATCC 35089 / DSM 1224 / JCM 13029 / OCM 148 / SB).